A 181-amino-acid chain; its full sequence is ECF RNA polymerase sigma factor EcfG (181 aa).

A sigma-70 factor domain-2 region spans residues Val15–Arg77. Residues Glu103–Leu155 are sigma-70 factor domain-4.

The protein belongs to the sigma-70 factor family. ECF subfamily.

Functionally, sigma factors are initiation factors that promote the attachment of RNA polymerase to specific initiation sites and are then released. Regulates expression of hpnP under a variety of stresses, including high temperature, pH stress, and presence of nonionic osmolytes. This is ECF RNA polymerase sigma factor EcfG from Rhodopseudomonas palustris (strain TIE-1).